Here is a 168-residue protein sequence, read N- to C-terminus: Disulfide bond formation protein B 1 (168 aa).

Topologically, residues 1-14 (MNEQTSRLNRERRF) are cytoplasmic. Residues 15-31 (LVLLGLICLSLIGGALY) traverse the membrane as a helical segment. Topologically, residues 32–49 (MQVVLGEAPCPLCILQRY) are periplasmic. Cys41 and Cys44 form a disulfide bridge. Residues 50–65 (ALLFIAVFAFIAAAMP) form a helical membrane-spanning segment. At 66-72 (GRRSLTF) the chain is on the cytoplasmic side. The helical transmembrane segment at 73-89 (FEALVVLSAIGGIVAAG) threads the bilayer. The Periplasmic portion of the chain corresponds to 90 to 144 (NHVYILANPMVSCGIDTLQPIVDDLPLAKLWPLAFQVDGFCSTPYPPILGLSLAQ). Cys102 and Cys130 are joined by a disulfide. Residues 145–163 (WALVAFVLTAVLVPLGIYR) form a helical membrane-spanning segment. Residues 164-168 (NRRQA) are Cytoplasmic-facing.

The protein belongs to the DsbB family.

Its subcellular location is the cell inner membrane. Functionally, required for disulfide bond formation in some periplasmic proteins. Acts by oxidizing the DsbA protein. In Pseudomonas putida (strain ATCC 47054 / DSM 6125 / CFBP 8728 / NCIMB 11950 / KT2440), this protein is Disulfide bond formation protein B 1 (dsbB1).